The chain runs to 579 residues: MLRYIIPRKKGTFVIAAFLTVAFFCIVAYHRNDRRRTKFQFPDIEKYAEELVRLPETWNGELHQIPNYTAPREGPGEKGKPVVLTGKDAELGQADMKKWFMNVHASDKISLDRDVPDPRIQACKDIKYDYAALPKTSVIIIFTDEAWTPLLRTVHSVINRSPPELLQEVILLDDNSKRQELQEPLDEHIKRFGGKVRLIRKHVRHGLIRAKLAGAREAVGDIIVFLDSHCEANHGWLEPIVQRISDERTAIVCPMIDSISDNTLAYHGDWSLSTGGFSWALHFTWEGLSEEEQKRRTKPTDYIRSPTMAGGLLAANREYFFEVGGYDEEMDIWGGENLEISFRAWMCGGSIEFIPCSHVGHIFRAGHPYNMTGRNNNKDVHGTNSKRLAEVWMDDYKRLYYMHREDLRTKDVGDLTARHELRKRLNCKPFKWFLDNIAKGKFIMDEDVVAYGALHTVVSGTRMCTDTLQRDEKMSQLLGVFHCQGKGSSPQLMSLSKEGNLRRENTCASEENGNIRMKTCSKKAQFNERWAYENKMIRNLKSGKCMSTANLKPGDNAIVVECDEKDEHQKWNFIDPAKA.

The Cytoplasmic segment spans residues 1–12; it reads MLRYIIPRKKGT. A helical; Signal-anchor for type II membrane protein membrane pass occupies residues 13 to 30; that stretch reads FVIAAFLTVAFFCIVAYH. Over 31 to 579 the chain is Lumenal; sequence RNDRRRTKFQ…KWNFIDPAKA (549 aa). N-linked (GlcNAc...) asparagine glycosylation is present at Asn67. Cystine bridges form between Cys123–Cys356, Cys347–Cys427, Cys464–Cys483, Cys507–Cys520, and Cys545–Cys562. The catalytic subdomain A stretch occupies residues 133–243; the sequence is LPKTSVIIIF…HGWLEPIVQR (111 aa). Substrate-binding residues include Asp174 and Arg204. Residue Asp227 coordinates Mn(2+). Residue Ser228 coordinates substrate. Position 229 (His229) interacts with Mn(2+). Residues 302–364 are catalytic subdomain B; sequence YIRSPTMAGG…PCSHVGHIFR (63 aa). Trp333 is a substrate binding site. His361 contributes to the Mn(2+) binding site. The substrate site is built by Arg364, His367, and Tyr369. N-linked (GlcNAc...) asparagine glycosylation occurs at Asn370. Positions 450 to 574 constitute a Ricin B-type lectin domain; sequence AYGALHTVVS…KDEHQKWNFI (125 aa).

Belongs to the glycosyltransferase 2 family. GalNAc-T subfamily. It depends on Mn(2+) as a cofactor.

The protein localises to the golgi apparatus membrane. It participates in protein modification; protein glycosylation. Probable glycopeptide transferase involved in O-linked oligosaccharide biosynthesis. Glycopeptide transferases catalyze the transfer of an N-acetyl-D-galactosamine residue to an already glycosylated peptide. In contrast to other members of the family, it does not act as a peptide transferase that transfers GalNAc onto serine or threonine residue on peptides that have been tested. Some peptide transferase activity is however not excluded, considering that its appropriate peptide substrate may remain unidentified. In Caenorhabditis elegans, this protein is Probable N-acetylgalactosaminyltransferase 9 (gly-9).